A 505-amino-acid polypeptide reads, in one-letter code: MSEQHAQGADAVTDLNNELKTRREKLASLREQGIPFPNDFRRDHTSDQLHADFDAKENEELEALNIEVSVAGRMMTRRIMGKASFVTLQDVGGRIQLYVARDDLPEGVYNEQFKKWDLGDILGAKGKLFKTKTGELSIHCTELRLLTKALRPLPDKFHGLQDQEARYRQRYLDLISNDESRNTFKVRSQIMAGIRQFMVGRGFMEVETPMMQVIPGGAAARPFITHHNALDLDMYLRIAPELYLKRLVVGGFERVFEINRNFRNEGISVRHNPEFTMMELYMAYADYKDLIELTESLFRTLAQDILGKTEVPYGDEVFDFGKPFEKLTMREAIKKYRPETDMADLDNFDSAKAIAESIGIKVEKSWGLGRIVTEIFEEVAEAHLIQPTFITEYPAEVSPLARRNDVNPEITDRFEFFIGGREIGNGFSELNDAEDQAQRFQDQVNAKEAGDDEAMFYDEDYVTALEHGLPPTAGLGIGIDRMVMLFTNSHTIRDVILFPAMRPVK.

Glu415 and Glu422 together coordinate Mg(2+).

Belongs to the class-II aminoacyl-tRNA synthetase family. As to quaternary structure, homodimer. It depends on Mg(2+) as a cofactor.

It localises to the cytoplasm. The enzyme catalyses tRNA(Lys) + L-lysine + ATP = L-lysyl-tRNA(Lys) + AMP + diphosphate. This Citrobacter koseri (strain ATCC BAA-895 / CDC 4225-83 / SGSC4696) protein is Lysine--tRNA ligase.